The primary structure comprises 447 residues: MLKKQSAGLVLWGAILFVAWNALLLLFFWTRPVPSRLPSDNALDDDPASLTREVIRLAQDAEVELERQRGLLQQIREHHALWSQRWKVPTAAPPAQPHVPVTPPPAVIPILVIACDRSTVRRCLDKLLHYRPSAELFPIIVSQDCGHEETAQVIASYGSAVTHIRQPDLSNIAVQPDHRKFQGYYKIARHYRWALGQIFHNFNYPAAVVVEDDLEVAPDFFEYFQATYPLLKADPSLWCVSAWNDNGKEQMVDSSKPELLYRTDFFPGLGWLLLAELWAELEPKWPKAFWDDWMRRPEQRKGRACVRPEISRTMTFGRKGVSHGQFFDQHLKFIKLNQQFVPFTQLDLSYLQQEAYDRDFLARVYGAPQLQVEKVRTNDRKELGEVRVQYTGRDSFKAFAKALGVMDDLKSGVPRAGYRGIVTFLFRGRRVHLAPPQTWDGYDPSWT.

Topologically, residues 1 to 6 (MLKKQS) are cytoplasmic. Residues 7–29 (AGLVLWGAILFVAWNALLLLFFW) traverse the membrane as a helical; Signal-anchor for type II membrane protein segment. Residues 30–447 (TRPVPSRLPS…TWDGYDPSWT (418 aa)) are Lumenal-facing. Cys115 and Cys145 form a disulfide bridge. Substrate-binding residues include Arg117, Asp144, His190, and Asp212. Asp213 is a binding site for Mn(2+). Cys239 and Cys305 form a disulfide bridge. The active-site Proton acceptor is the Asp291. Ser322 contributes to the substrate binding site.

The protein belongs to the glycosyltransferase 13 family. In terms of assembly, interacts with MGAT4D. Interacts with BRI3. The cofactor is Mn(2+).

Its subcellular location is the golgi apparatus membrane. It localises to the cytoplasm. The protein localises to the perinuclear region. The enzyme catalyses N(4)-(alpha-D-Man-(1-&gt;3)-[alpha-D-Man-(1-&gt;3)-[alpha-D-Man-(1-&gt;6)]-alpha-D-Man-(1-&gt;6)]-beta-D-Man-(1-&gt;4)-beta-D-GlcNAc-(1-&gt;4)-beta-D-GlcNAc)-L-asparaginyl-[protein] (N-glucan mannose isomer 5A1,2) + UDP-N-acetyl-alpha-D-glucosamine = N(4)-{beta-D-GlcNAc-(1-&gt;2)-alpha-D-Man-(1-&gt;3)-[alpha-D-Man-(1-&gt;3)-[alpha-D-Man-(1-&gt;6)]-alpha-D-Man-(1-&gt;6)]-beta-D-Man-(1-&gt;4)-beta-D-GlcNAc-(1-&gt;4)-beta-D-GlcNAc}-L-asparaginyl-[protein] + UDP + H(+). The protein operates within protein modification; protein glycosylation. Its function is as follows. Initiates complex N-linked carbohydrate formation. Essential for the conversion of high-mannose to hybrid and complex N-glycans. This Oryctolagus cuniculus (Rabbit) protein is Alpha-1,3-mannosyl-glycoprotein 2-beta-N-acetylglucosaminyltransferase (MGAT1).